The chain runs to 98 residues: NADH-ubiquinone oxidoreductase chain 4L (98 aa).

3 helical membrane passes run 1-21, 29-49, and 61-81; these read MSLV…GLLM, SLLC…IMVL, and IILL…LVMV.

This sequence belongs to the complex I subunit 4L family. As to quaternary structure, core subunit of respiratory chain NADH dehydrogenase (Complex I) which is composed of 45 different subunits.

It is found in the mitochondrion inner membrane. The enzyme catalyses a ubiquinone + NADH + 5 H(+)(in) = a ubiquinol + NAD(+) + 4 H(+)(out). Functionally, core subunit of the mitochondrial membrane respiratory chain NADH dehydrogenase (Complex I) which catalyzes electron transfer from NADH through the respiratory chain, using ubiquinone as an electron acceptor. Part of the enzyme membrane arm which is embedded in the lipid bilayer and involved in proton translocation. The chain is NADH-ubiquinone oxidoreductase chain 4L (MT-ND4L) from Pseudosoriculus fumidus (Taiwanese brown-toothed shrew).